Reading from the N-terminus, the 369-residue chain is Bi-functional coumaroyl CoA and feruloyl CoA ortho-hydroxylase Diox1 (369 aa).

Positions 209–319 (IREPMLVGSR…RISVPLFVNP (111 aa)) constitute a Fe2OG dioxygenase domain. Tyr-225 provides a ligand contact to 2-oxoglutarate. Positions 240, 242, and 300 each coordinate Fe cation. Residues Arg-310 and Ser-312 each coordinate 2-oxoglutarate.

The protein belongs to the iron/ascorbate-dependent oxidoreductase family. It depends on L-ascorbate as a cofactor. The cofactor is Fe(2+).

It carries out the reaction (E)-4-coumaroyl-CoA + 2-oxoglutarate + O2 = (E)-2,4-dihydroxycinnamoyl-CoA + succinate + CO2. The enzyme catalyses (E)-feruloyl-CoA + 2-oxoglutarate + O2 = (E)-6-hydroxyferuloyl-CoA + succinate + CO2. It functions in the pathway phenylpropanoid metabolism. Its function is as follows. 2-oxoglutarate (OG)- and Fe(II)-dependent dioxygenase (2OGD) involved in scopoletin and umbelliferone biosynthesis. Converts feruloyl CoA into 6'-hydroxyferuloyl CoA, and p-coumaroyl CoA into 2,4-dihydroxycinnamoyl-CoA. The polypeptide is Bi-functional coumaroyl CoA and feruloyl CoA ortho-hydroxylase Diox1 (Ruta graveolens (Common rue)).